We begin with the raw amino-acid sequence, 105 residues long: Blood plasma apolipoprotein LAL1 (105 aa).

The N-terminal stretch at 1-21 (MKLHVAALATLAVVCILAAGS) is a signal peptide. Positions 22–29 (EAAPKAMS) are excised as a propeptide.

Plasma.

It is found in the secreted. This Petromyzon marinus (Sea lamprey) protein is Blood plasma apolipoprotein LAL1.